A 928-amino-acid chain; its full sequence is Protein NETWORKED 2B (928 aa).

One can recognise an NAB domain in the interval 10–90 (YSWWWASHIR…ERYDHLSTEL (81 aa)). The interval 108 to 144 (PLVDDDDDDDDDNPKKPPKHLHLIPSGTNIPQVPEVP) is disordered. Residues 110–119 (VDDDDDDDDD) are compositionally biased toward acidic residues. Coiled coils occupy residues 207-309 (SYEQ…AKKA) and 360-445 (ALLK…VKMD). Disordered regions lie at residues 447-472 (DVEG…SISN) and 489-529 (KQSR…EERR). Positions 457–468 (DIQEEDTVEDSD) are enriched in acidic residues. Over residues 489–506 (KQSRDQESMQEEKSETRD) the composition is skewed to basic and acidic residues. The stretch at 547-574 (LLDEYSSVLRDYREVKRKLSEVEKKNRD) forms a coiled coil. Positions 620-651 (AESVSISHSSNSSFSMPPLPQRGDLKRASEQE) are disordered. The span at 622 to 634 (SVSISHSSNSSFS) shows a compositional bias: low complexity. Basic and acidic residues predominate over residues 642–651 (GDLKRASEQE).

Belongs to the NET family.

In terms of biological role, plant-specific actin binding protein. May be part of a membrane-cytoskeletal adapter complex. This Arabidopsis thaliana (Mouse-ear cress) protein is Protein NETWORKED 2B.